We begin with the raw amino-acid sequence, 190 residues long: Lipid A acyltransferase PagP (190 aa).

The first 18 residues, 1 to 18 (MKRLISCLTIICALNASA), serve as a signal peptide directing secretion. Residues histidine 60, aspartate 103, and serine 104 contribute to the active site.

The protein belongs to the lipid A palmitoyltransferase family. In terms of assembly, homodimer.

The protein resides in the cell outer membrane. The catalysed reaction is a lipid A + a 1,2-diacyl-sn-glycero-3-phosphocholine = a hepta-acyl lipid A + a 2-acyl-sn-glycero-3-phosphocholine. It carries out the reaction a lipid IVA + a 1,2-diacyl-sn-glycero-3-phosphocholine = a lipid IVB + a 2-acyl-sn-glycero-3-phosphocholine. The enzyme catalyses a lipid IIA + a 1,2-diacyl-sn-glycero-3-phosphocholine = a lipid IIB + a 2-acyl-sn-glycero-3-phosphocholine. Transfers a fatty acid residue from the sn-1 position of a phospholipid to the N-linked hydroxyfatty acid chain on the proximal unit of lipid A or its precursors. This Legionella pneumophila serogroup 1 (strain 2300/99 Alcoy) protein is Lipid A acyltransferase PagP.